Reading from the N-terminus, the 305-residue chain is Protoheme IX farnesyltransferase (305 aa).

Helical transmembrane passes span 31–51 (VMSL…YSVH), 52–72 (PFIA…AGAI), 102–119 (ALSF…FMAL), 123–145 (LLAS…IWLK), 151–171 (NIVI…AAVS), 179–199 (IILF…LALF), 218–238 (ILYT…VSLM), 240–260 (FFIG…GLVF), and 281–301 (FAYS…TSTI).

Belongs to the UbiA prenyltransferase family. Protoheme IX farnesyltransferase subfamily.

It localises to the cell inner membrane. It catalyses the reaction heme b + (2E,6E)-farnesyl diphosphate + H2O = Fe(II)-heme o + diphosphate. It participates in porphyrin-containing compound metabolism; heme O biosynthesis; heme O from protoheme: step 1/1. Its function is as follows. Converts heme B (protoheme IX) to heme O by substitution of the vinyl group on carbon 2 of heme B porphyrin ring with a hydroxyethyl farnesyl side group. The protein is Protoheme IX farnesyltransferase of Rickettsia akari (strain Hartford).